Reading from the N-terminus, the 1057-residue chain is Carbamoyl phosphate synthase large chain (1057 aa).

The interval 1 to 401 (MPKRNDIKTI…SLLKAIRSLE (401 aa)) is carboxyphosphate synthetic domain. ATP contacts are provided by R129, R169, G175, G176, K208, I210, E215, G241, I242, H243, Q284, and E298. One can recognise an ATP-grasp 1 domain in the interval 133-327 (RTLMNDLNVP…IAKLAAKIAV (195 aa)). Positions 284, 298, and 300 each coordinate Mg(2+). Q284, E298, and N300 together coordinate Mn(2+). An oligomerization domain region spans residues 402–546 (YGVHHLGLPN…YGTYETENES (145 aa)). The carbamoyl phosphate synthetic domain stretch occupies residues 547–929 (IVTDKEKILV…ALFKGLTGSG (383 aa)). The ATP-grasp 2 domain occupies 671 to 861 (EALLRKINVP…MAQLAMRAII (191 aa)). The ATP site is built by R707, R746, L748, E752, G777, V778, H779, S780, Q820, and E832. Q820, E832, and N834 together coordinate Mg(2+). Mn(2+)-binding residues include Q820, E832, and N834. Residues 930 to 1057 (VEVKDHGTVL…ESMTFTMRQM (128 aa)) enclose the MGS-like domain. An allosteric domain region spans residues 930 to 1057 (VEVKDHGTVL…ESMTFTMRQM (128 aa)).

The protein belongs to the CarB family. As to quaternary structure, composed of two chains; the small (or glutamine) chain promotes the hydrolysis of glutamine to ammonia, which is used by the large (or ammonia) chain to synthesize carbamoyl phosphate. Tetramer of heterodimers (alpha,beta)4. Mg(2+) serves as cofactor. Mn(2+) is required as a cofactor.

It carries out the reaction hydrogencarbonate + L-glutamine + 2 ATP + H2O = carbamoyl phosphate + L-glutamate + 2 ADP + phosphate + 2 H(+). The catalysed reaction is hydrogencarbonate + NH4(+) + 2 ATP = carbamoyl phosphate + 2 ADP + phosphate + 2 H(+). It functions in the pathway amino-acid biosynthesis; L-arginine biosynthesis; carbamoyl phosphate from bicarbonate: step 1/1. It participates in pyrimidine metabolism; UMP biosynthesis via de novo pathway; (S)-dihydroorotate from bicarbonate: step 1/3. Functionally, large subunit of the glutamine-dependent carbamoyl phosphate synthetase (CPSase). CPSase catalyzes the formation of carbamoyl phosphate from the ammonia moiety of glutamine, carbonate, and phosphate donated by ATP, constituting the first step of 2 biosynthetic pathways, one leading to arginine and/or urea and the other to pyrimidine nucleotides. The large subunit (synthetase) binds the substrates ammonia (free or transferred from glutamine from the small subunit), hydrogencarbonate and ATP and carries out an ATP-coupled ligase reaction, activating hydrogencarbonate by forming carboxy phosphate which reacts with ammonia to form carbamoyl phosphate. This Staphylococcus aureus (strain USA300 / TCH1516) protein is Carbamoyl phosphate synthase large chain.